Reading from the N-terminus, the 322-residue chain is Acetyl-coenzyme A carboxylase carboxyl transferase subunit alpha 2 (322 aa).

Residues 37-294 (EINRLSARSE…KRVLQESLRN (258 aa)) enclose the CoA carboxyltransferase C-terminal domain.

Belongs to the AccA family. In terms of assembly, acetyl-CoA carboxylase is a heterohexamer composed of biotin carboxyl carrier protein (AccB), biotin carboxylase (AccC) and two subunits each of ACCase subunit alpha (AccA) and ACCase subunit beta (AccD).

It localises to the cytoplasm. It carries out the reaction N(6)-carboxybiotinyl-L-lysyl-[protein] + acetyl-CoA = N(6)-biotinyl-L-lysyl-[protein] + malonyl-CoA. It functions in the pathway lipid metabolism; malonyl-CoA biosynthesis; malonyl-CoA from acetyl-CoA: step 1/1. Functionally, component of the acetyl coenzyme A carboxylase (ACC) complex. First, biotin carboxylase catalyzes the carboxylation of biotin on its carrier protein (BCCP) and then the CO(2) group is transferred by the carboxyltransferase to acetyl-CoA to form malonyl-CoA. In terms of biological role, confers resistance to the endogenous polyketide antibiotic thailandamide. Can replace the endogenous gene in S.typhimurium, conferring slow growth and resistance to thailandamide. Can also replace the endogenous gene in E.coli, conferring resistance to thailandamide. This Burkholderia thailandensis (strain ATCC 700388 / DSM 13276 / CCUG 48851 / CIP 106301 / E264) protein is Acetyl-coenzyme A carboxylase carboxyl transferase subunit alpha 2.